Consider the following 152-residue polypeptide: Ribosome maturation factor RimP (152 aa).

It belongs to the RimP family.

The protein resides in the cytoplasm. Required for maturation of 30S ribosomal subunits. This chain is Ribosome maturation factor RimP, found in Serratia proteamaculans (strain 568).